The following is a 546-amino-acid chain: T-complex protein 1 subunit zeta (546 aa).

Ser-2 carries the N-acetylserine modification. At Ser-249 the chain carries Phosphoserine.

Belongs to the TCP-1 chaperonin family. Heterooligomeric complex of about 850 to 900 kDa that forms two stacked rings, 12 to 16 nm in diameter.

It localises to the cytoplasm. Molecular chaperone; assists the folding of proteins upon ATP hydrolysis. Known to play a role, in vitro, in the folding of actin and tubulin. In yeast may play a role in mitotic spindle formation. This is T-complex protein 1 subunit zeta (CCT6) from Saccharomyces cerevisiae (strain ATCC 204508 / S288c) (Baker's yeast).